A 156-amino-acid chain; its full sequence is Endoribonuclease YbeY (156 aa).

Histidine 117, histidine 121, and histidine 127 together coordinate Zn(2+).

It belongs to the endoribonuclease YbeY family. It depends on Zn(2+) as a cofactor.

Its subcellular location is the cytoplasm. Single strand-specific metallo-endoribonuclease involved in late-stage 70S ribosome quality control and in maturation of the 3' terminus of the 16S rRNA. The sequence is that of Endoribonuclease YbeY from Shewanella pealeana (strain ATCC 700345 / ANG-SQ1).